The following is a 272-amino-acid chain: Orotidine 5'-phosphate decarboxylase (272 aa).

Lysine 96 acts as the Proton donor in catalysis.

The protein belongs to the OMP decarboxylase family. Type 2 subfamily.

The catalysed reaction is orotidine 5'-phosphate + H(+) = UMP + CO2. It participates in pyrimidine metabolism; UMP biosynthesis via de novo pathway; UMP from orotate: step 2/2. The sequence is that of Orotidine 5'-phosphate decarboxylase from Christiangramia forsetii (strain DSM 17595 / CGMCC 1.15422 / KT0803) (Gramella forsetii).